The primary structure comprises 496 residues: Probable CtpA-like serine protease (496 aa).

Residues Met1–Glu16 show a composition bias toward basic and acidic residues. Residues Met1 to Asn27 are disordered. The segment covering Ala18–Asn27 has biased composition (polar residues). Residues Phe39–Ile59 form a helical membrane-spanning segment. The 83-residue stretch at Thr124–Gly206 folds into the PDZ domain. Active-site charge relay system residues include Ser329, Asp340, and Lys354.

It belongs to the peptidase S41A family.

The protein resides in the cell membrane. In Staphylococcus aureus (strain Mu50 / ATCC 700699), this protein is Probable CtpA-like serine protease.